The chain runs to 333 residues: Ketol-acid reductoisomerase (NADP(+)) (333 aa).

The KARI N-terminal Rossmann domain occupies 1–171; the sequence is MSNHTQPKIA…GGARANIIKT (171 aa). Residues 14-17, Arg37, Thr42, and 72-75 contribute to the NADP(+) site; these read YGSQ and DMVQ. Residue His97 is part of the active site. NADP(+) is bound at residue Gly123. Positions 172–317 constitute a KARI C-terminal knotted domain; sequence TFKEETETDL…KKLRAKMVWL (146 aa). 4 residues coordinate Mg(2+): Asp180, Glu184, Glu216, and Glu220. Ser241 contacts substrate.

This sequence belongs to the ketol-acid reductoisomerase family. Requires Mg(2+) as cofactor.

It carries out the reaction (2R)-2,3-dihydroxy-3-methylbutanoate + NADP(+) = (2S)-2-acetolactate + NADPH + H(+). The catalysed reaction is (2R,3R)-2,3-dihydroxy-3-methylpentanoate + NADP(+) = (S)-2-ethyl-2-hydroxy-3-oxobutanoate + NADPH + H(+). Its pathway is amino-acid biosynthesis; L-isoleucine biosynthesis; L-isoleucine from 2-oxobutanoate: step 2/4. It participates in amino-acid biosynthesis; L-valine biosynthesis; L-valine from pyruvate: step 2/4. Its function is as follows. Involved in the biosynthesis of branched-chain amino acids (BCAA). Catalyzes an alkyl-migration followed by a ketol-acid reduction of (S)-2-acetolactate (S2AL) to yield (R)-2,3-dihydroxy-isovalerate. In the isomerase reaction, S2AL is rearranged via a Mg-dependent methyl migration to produce 3-hydroxy-3-methyl-2-ketobutyrate (HMKB). In the reductase reaction, this 2-ketoacid undergoes a metal-dependent reduction by NADPH to yield (R)-2,3-dihydroxy-isovalerate. The chain is Ketol-acid reductoisomerase (NADP(+)) from Xanthomonas axonopodis pv. citri (strain 306).